Reading from the N-terminus, the 190-residue chain is Jupiter microtubule associated homolog 2 (190 aa).

At Met-1 the chain carries N-acetylmethionine. Residues 1–15 (MFQGADSQAGKSGSR) show a composition bias toward polar residues. The disordered stretch occupies residues 1–190 (MFQGADSQAG…PGGKSSLSFY (190 aa)). N6-acetyllysine is present on Lys-11. At Ser-30 the chain carries Phosphoserine. The segment covering 35-44 (ISSSKPNRMA) has biased composition (polar residues). A phosphoserine mark is found at Ser-45, Ser-69, and Ser-97. Composition is skewed to basic and acidic residues over residues 110–129 (KPKD…DLKA) and 138–153 (EQSD…HAKI). Residue Ser-144 is modified to Phosphoserine.

This sequence belongs to the JUPITER family. In terms of assembly, monomer. Dimer. Interacts with TPCN1.

It localises to the cytoplasm. It is found in the nucleus. Its function is as follows. Nicotinic acid adenine dinucleotide phosphate (NAADP) binding protein required for NAADP-evoked intracellular calcium release. Confers NAADP-sensitivity to the two pore channels (TPCs) complex. Enables NAADP to activate Ca(2+) release from the endoplasmic reticulum through ryanodine receptors. In Mus musculus (Mouse), this protein is Jupiter microtubule associated homolog 2.